Here is a 617-residue protein sequence, read N- to C-terminus: Proline--tRNA ligase (617 aa).

The protein belongs to the class-II aminoacyl-tRNA synthetase family. ProS type 1 subfamily. In terms of assembly, homodimer.

The protein resides in the cytoplasm. It catalyses the reaction tRNA(Pro) + L-proline + ATP = L-prolyl-tRNA(Pro) + AMP + diphosphate. Catalyzes the attachment of proline to tRNA(Pro) in a two-step reaction: proline is first activated by ATP to form Pro-AMP and then transferred to the acceptor end of tRNA(Pro). As ProRS can inadvertently accommodate and process non-cognate amino acids such as alanine and cysteine, to avoid such errors it has two additional distinct editing activities against alanine. One activity is designated as 'pretransfer' editing and involves the tRNA(Pro)-independent hydrolysis of activated Ala-AMP. The other activity is designated 'posttransfer' editing and involves deacylation of mischarged Ala-tRNA(Pro). The misacylated Cys-tRNA(Pro) is not edited by ProRS. The sequence is that of Proline--tRNA ligase from Streptococcus agalactiae serotype V (strain ATCC BAA-611 / 2603 V/R).